A 299-amino-acid polypeptide reads, in one-letter code: Porphobilinogen deaminase (299 aa).

Cys234 bears the S-(dipyrrolylmethanemethyl)cysteine mark.

It belongs to the HMBS family. Monomer. Dipyrromethane is required as a cofactor.

The catalysed reaction is 4 porphobilinogen + H2O = hydroxymethylbilane + 4 NH4(+). The protein operates within porphyrin-containing compound metabolism; protoporphyrin-IX biosynthesis; coproporphyrinogen-III from 5-aminolevulinate: step 2/4. Tetrapolymerization of the monopyrrole PBG into the hydroxymethylbilane pre-uroporphyrinogen in several discrete steps. The sequence is that of Porphobilinogen deaminase from Corynebacterium efficiens (strain DSM 44549 / YS-314 / AJ 12310 / JCM 11189 / NBRC 100395).